An 825-amino-acid chain; its full sequence is Breast cancer anti-estrogen resistance protein 3 homolog (825 aa).

N-acetylalanine is present on A2. Residues S32, S78, S83, S182, and S290 each carry the phosphoserine modification. The interval 40 to 84 is disordered; the sequence is EAYPDVSIHGTLPRKKKGPPPIRSCDSASHMGTLPHSKSPRQSSP. Residues 154–253 form the SH2 domain; sequence WYHGRIPRQV…QSGAIIFQPI (100 aa). Residues 300–320 are disordered; that stretch reads DHSLPRGNLLRNKDKSGSQPA. The residue at position 334 (K334) is an N6-methyllysine. 3 positions are modified to phosphoserine: S358, S363, and S375. Omega-N-methylarginine is present on R442. Residue S471 is modified to Phosphoserine. One can recognise a Ras-GEF domain in the interval 548 to 818; that stretch reads DARVIAQHML…TALSRKLEPP (271 aa). Residues 744–748 form a mediates the interaction with BCAR1/p130CAS region; the sequence is LATAR.

Part of a complex comprised of PTPRA, BCAR1, BCAR3 and SRC; the formation of the complex is dependent on integrin mediated-tyrosine phosphorylation of PTPRA. Within the complex, interacts (via SH2 domain) with PTPRA (when phosphorylated on 'Tyr-792'). Interacts (via Ras-GEF domain) with BCAR1. Interacts (via Ras-GEF domain) with NEDD9. Interacts with PTK2/FAK1. Interacts with PTPN1. Interacts (via SH2 domain) with EGFR (when tyrosine-phosphorylated). In terms of processing, phosphorylated on tyrosine residues.

The protein localises to the cytoplasm. The protein resides in the cell junction. It is found in the focal adhesion. Functionally, acts as an adapter protein downstream of several growth factor receptors to promote cell proliferation, migration, and redistribution of actin fibers. Specifically involved in INS/insulin signaling pathway by mediating MAPK1/ERK2-MAPK3/ERK1 activation and DNA synthesis. Promotes insulin-mediated membrane ruffling. In response to vasoconstrictor peptide EDN1, involved in the activation of RAP1 downstream of PTK2B via interaction with phosphorylated BCAR1. Inhibits cell migration and invasion via regulation of TGFB-mediated matrix digestion, actin filament rearrangement, and inhibition of invadopodia activity. May inhibit TGFB/SMAD signaling, via facilitating BCAR1 and SMAD2 and/or SMAD3 interaction. Regulates EGF-induced DNA synthesis. Required for the maintenance of ocular lens morphology and structural integrity, potentially via regulation of focal adhesion complex signaling. Acts upstream of PTPRA to regulate the localization of BCAR1 and PTPRA to focal adhesions, via regulation of SRC-mediated phosphorylation of PTPRA. Positively regulates integrin-induced tyrosine phosphorylation of BCAR1. Acts as a guanine nucleotide exchange factor (GEF) for small GTPases RALA, RAP1A and RRAS. However, in a contrasting study, lacks GEF activity towards RAP1. The protein is Breast cancer anti-estrogen resistance protein 3 homolog of Rattus norvegicus (Rat).